A 298-amino-acid chain; its full sequence is Homoserine kinase (298 aa).

Position 85–95 (85–95 (PMGGLGSSAAS)) interacts with ATP.

Belongs to the GHMP kinase family. Homoserine kinase subfamily.

It is found in the cytoplasm. It catalyses the reaction L-homoserine + ATP = O-phospho-L-homoserine + ADP + H(+). It participates in amino-acid biosynthesis; L-threonine biosynthesis; L-threonine from L-aspartate: step 4/5. Its function is as follows. Catalyzes the ATP-dependent phosphorylation of L-homoserine to L-homoserine phosphate. This Methanopyrus kandleri (strain AV19 / DSM 6324 / JCM 9639 / NBRC 100938) protein is Homoserine kinase.